Consider the following 241-residue polypeptide: Platelet-derived growth factor subunit B (241 aa).

An N-terminal signal peptide occupies residues 1 to 20; that stretch reads MNRCWALFLSLCCYLRLVSA. Positions 21–81 are cleaved as a propeptide — removed in mature form; that stretch reads EGDPIPEELY…ELESLSRGRR (61 aa). Residue asparagine 63 is glycosylated (N-linked (GlcNAc...) asparagine). Disulfide bonds link cysteine 97/cysteine 141, cysteine 130/cysteine 178, and cysteine 134/cysteine 180. The propeptide at 191 to 241 is removed in mature form; the sequence is TPGSSQEQRAARTPQTRVTIRTVRVRRPPKGKHRKFKHTHDKTALKETLGA. Residues 217-230 show a composition bias toward basic residues; the sequence is RPPKGKHRKFKHTH. A disordered region spans residues 217–241; the sequence is RPPKGKHRKFKHTHDKTALKETLGA.

Belongs to the PDGF/VEGF growth factor family. Antiparallel homodimer; disulfide-linked. Antiparallel heterodimer with PDGFA; disulfide-linked. The PDGFB homodimer interacts with PDGFRA and PDGFRB homodimers, and with heterodimers formed by PDGFRA and PDGFRB. The heterodimer composed of PDGFA and PDGFB interacts with PDGFRB homodimers, and with heterodimers formed by PDGFRA and PDGFRB. Interacts with XLKD1. Interacts with LRP1. Interacts with SORL1 (via the N-terminal ectodomain). Interacts with CD82; this interaction inhibits PDGFB-mediated signaling pathway.

It localises to the secreted. Functionally, growth factor that plays an essential role in the regulation of embryonic development, cell proliferation, cell migration, survival and chemotaxis. Potent mitogen for cells of mesenchymal origin. Required for normal proliferation and recruitment of pericytes and vascular smooth muscle cells in the central nervous system, skin, lung, heart and placenta. Required for normal blood vessel development, and for normal development of kidney glomeruli. Plays an important role in wound healing. Signaling is modulated by the formation of heterodimers with PDGFA. This Ovis aries (Sheep) protein is Platelet-derived growth factor subunit B (PDGFB).